A 652-amino-acid chain; its full sequence is UvrABC system protein C (652 aa).

The GIY-YIG domain maps to 19–96; sequence KTSGVYLWKD…IKKHKPRYNI (78 aa). Positions 203–238 constitute a UVR domain; sequence EDVSGTLKEKMKEAAEKKEFEKAARLRDGIQAVYAL.

It belongs to the UvrC family. Interacts with UvrB in an incision complex.

It is found in the cytoplasm. Its function is as follows. The UvrABC repair system catalyzes the recognition and processing of DNA lesions. UvrC both incises the 5' and 3' sides of the lesion. The N-terminal half is responsible for the 3' incision and the C-terminal half is responsible for the 5' incision. In Treponema denticola (strain ATCC 35405 / DSM 14222 / CIP 103919 / JCM 8153 / KCTC 15104), this protein is UvrABC system protein C.